Consider the following 246-residue polypeptide: MPHFIDLGVNVDHVATLRQARRGQEPDPITAASLAEQGGADGITFHLREDRRHISDRDVELFVQTVQVRTNFELACAADVLAICCRVQPDWALLVPESREEVTTEGGLDVAGDSGRIADAIQMLKDAGIATSLFLDPEPNQIEAAAKLQVDAVELHTGPYALARGAAVQHELRRLADTGKMIRDAGMRLHAGHGLNYVNVRPVAAIDGMAELNIGHSIVSRSVMVGMREAVAEMRRLLDSVTIAAQ.

Residue N10 participates in 3-amino-2-oxopropyl phosphate binding. 12-13 contacts 1-deoxy-D-xylulose 5-phosphate; it reads DH. R21 contacts 3-amino-2-oxopropyl phosphate. H46 functions as the Proton acceptor in the catalytic mechanism. Positions 48 and 53 each coordinate 1-deoxy-D-xylulose 5-phosphate. E73 (proton acceptor) is an active-site residue. T103 is a binding site for 1-deoxy-D-xylulose 5-phosphate. Catalysis depends on H193, which acts as the Proton donor. 3-amino-2-oxopropyl phosphate-binding positions include G194 and 215-216; that span reads GH.

It belongs to the PNP synthase family. As to quaternary structure, homooctamer; tetramer of dimers.

It localises to the cytoplasm. The enzyme catalyses 3-amino-2-oxopropyl phosphate + 1-deoxy-D-xylulose 5-phosphate = pyridoxine 5'-phosphate + phosphate + 2 H2O + H(+). It participates in cofactor biosynthesis; pyridoxine 5'-phosphate biosynthesis; pyridoxine 5'-phosphate from D-erythrose 4-phosphate: step 5/5. Its function is as follows. Catalyzes the complicated ring closure reaction between the two acyclic compounds 1-deoxy-D-xylulose-5-phosphate (DXP) and 3-amino-2-oxopropyl phosphate (1-amino-acetone-3-phosphate or AAP) to form pyridoxine 5'-phosphate (PNP) and inorganic phosphate. In Rhodopirellula baltica (strain DSM 10527 / NCIMB 13988 / SH1), this protein is Pyridoxine 5'-phosphate synthase.